A 329-amino-acid polypeptide reads, in one-letter code: Glutamyl-Q tRNA(Asp) synthetase (329 aa).

L-glutamate-binding positions include 8–12 (RLAPS) and Glu44. The 'HIGH' region signature appears at 11 to 21 (PSPTGAQHLGN). Residues Cys100, Cys102, Tyr129, and Cys133 each coordinate Zn(2+). 2 residues coordinate L-glutamate: Tyr196 and Arg214. A 'KMSKS' region motif is present at residues 252–256 (RLAKR). Lys255 contacts ATP.

It belongs to the class-I aminoacyl-tRNA synthetase family. GluQ subfamily. The cofactor is Zn(2+).

Catalyzes the tRNA-independent activation of glutamate in presence of ATP and the subsequent transfer of glutamate onto a tRNA(Asp). Glutamate is transferred on the 2-amino-5-(4,5-dihydroxy-2-cyclopenten-1-yl) moiety of the queuosine in the wobble position of the QUC anticodon. The polypeptide is Glutamyl-Q tRNA(Asp) synthetase (Rhodopirellula baltica (strain DSM 10527 / NCIMB 13988 / SH1)).